A 124-amino-acid polypeptide reads, in one-letter code: Small ribosomal subunit protein uS13 (124 aa).

Residues 95 to 124 (GLPVRGQRTKTNARTRKGPKRTIAGKKKAK) form a disordered region.

It belongs to the universal ribosomal protein uS13 family. In terms of assembly, part of the 30S ribosomal subunit. Forms a loose heterodimer with protein S19. Forms two bridges to the 50S subunit in the 70S ribosome.

In terms of biological role, located at the top of the head of the 30S subunit, it contacts several helices of the 16S rRNA. In the 70S ribosome it contacts the 23S rRNA (bridge B1a) and protein L5 of the 50S subunit (bridge B1b), connecting the 2 subunits; these bridges are implicated in subunit movement. Contacts the tRNAs in the A and P-sites. The protein is Small ribosomal subunit protein uS13 of Rhodococcus erythropolis (strain PR4 / NBRC 100887).